Reading from the N-terminus, the 135-residue chain is Putative pre-16S rRNA nuclease (135 aa).

Belongs to the YqgF nuclease family.

The protein localises to the cytoplasm. Functionally, could be a nuclease involved in processing of the 5'-end of pre-16S rRNA. This is Putative pre-16S rRNA nuclease from Clostridium novyi (strain NT).